The chain runs to 434 residues: FAD-dependent monooxygenase cfoG (434 aa).

A signal peptide spans 1 to 22 (MKSSPGLHIIIVGAGITGLATA). Glutamate 36 contacts FAD. Residues arginine 193 and tyrosine 233 contribute to the active site. Residues aspartate 314 and glycine 327 each coordinate FAD.

The protein belongs to the paxM FAD-dependent monooxygenase family. In terms of assembly, monomer. The cofactor is FAD.

It participates in secondary metabolite biosynthesis; flavonoid biosynthesis. In terms of biological role, monooxygenase; part of the gene cluster that mediates the biosynthesis of chlorflavonin, a fungal flavonoid with acetolactate synthase inhibitory activity. Within the pathway, cfoG is responsible for the hydroxylation of the flavonoid skeleton at position C8. The pathway begins with the PKS-NRPS hybrid synthetase cfoA that uses benzoic acid or p-hydroxybenzoic acid as a starter unit with four rounds of chain elongation using malonyl-CoA to form the chalcone skeleton. Then, a new type of chalcone isomerase, cfoK, catalyzes the conversion of the chalcone into a flavanone by a histidine-mediated oxa-Michael addition mechanism. The desaturation of flavanone to flavone is catalyzed by a new type of flavone synthase, the flavin mononucleotide (FMN)-dependent oxidoreductase cfoJ. Monooxygenases cfoF, cfoG, and P450 cfoH are responsible for the hydroxylation of the flavonoid skeleton at sites C3, C8, and C2', respectively. Like cfoF, the dehydratase cfoI plays also a role in the hydroxylation of position C3. Methyltransferases cfoB, cfoC, and cfoD then catalyze the methylation of C7-OH, C8-OH, and C3-OH, respectively. Finally, the monooxygenase cfoE is responsible for the chlorination of flavonoid at position C3'. The chain is FAD-dependent monooxygenase cfoG from Aspergillus candidus.